The sequence spans 423 residues: GTPase Obg (423 aa).

In terms of domain architecture, Obg spans 1–158; it reads MFYDEAKIYV…RWLVLELKLL (158 aa). The OBG-type G domain occupies 159 to 328; the sequence is ADVGLIGLPN…LLYHVSGLLA (170 aa). GTP contacts are provided by residues 165–172, 190–194, 212–215, 281–284, and 309–311; these read GLPNAGKS, FTTLT, DIPG, NKMD, and SAA. Positions 172 and 192 each coordinate Mg(2+). The OCT domain occupies 336–421; that stretch reads VTAPEEEKVT…IGKFEFEYVE (86 aa).

It belongs to the TRAFAC class OBG-HflX-like GTPase superfamily. OBG GTPase family. In terms of assembly, monomer. It depends on Mg(2+) as a cofactor.

The protein resides in the cytoplasm. In terms of biological role, an essential GTPase which binds GTP, GDP and possibly (p)ppGpp with moderate affinity, with high nucleotide exchange rates and a fairly low GTP hydrolysis rate. Plays a role in control of the cell cycle, stress response, ribosome biogenesis and in those bacteria that undergo differentiation, in morphogenesis control. The protein is GTPase Obg of Moorella thermoacetica (strain ATCC 39073 / JCM 9320).